A 135-amino-acid polypeptide reads, in one-letter code: Transcription antitermination protein NusB (135 aa).

It belongs to the NusB family.

Its function is as follows. Involved in transcription antitermination. Required for transcription of ribosomal RNA (rRNA) genes. Binds specifically to the boxA antiterminator sequence of the ribosomal RNA (rrn) operons. In Shewanella piezotolerans (strain WP3 / JCM 13877), this protein is Transcription antitermination protein NusB.